Consider the following 220-residue polypeptide: Protein-L-isoaspartate O-methyltransferase (220 aa).

The active site involves Ser-70.

Belongs to the methyltransferase superfamily. L-isoaspartyl/D-aspartyl protein methyltransferase family.

It localises to the cytoplasm. The catalysed reaction is [protein]-L-isoaspartate + S-adenosyl-L-methionine = [protein]-L-isoaspartate alpha-methyl ester + S-adenosyl-L-homocysteine. In terms of biological role, catalyzes the methyl esterification of L-isoaspartyl residues in peptides and proteins that result from spontaneous decomposition of normal L-aspartyl and L-asparaginyl residues. It plays a role in the repair and/or degradation of damaged proteins. The polypeptide is Protein-L-isoaspartate O-methyltransferase (Halorhodospira halophila (strain DSM 244 / SL1) (Ectothiorhodospira halophila (strain DSM 244 / SL1))).